Reading from the N-terminus, the 1323-residue chain is MEDGGLTAFEEDQRCLSQSLPLPVSAEGPAAQTTAEPSRSFSSAHRHLSRRNGLSRLCQSRTALSEDRWSSYCLSSLAAQNICTSKLHCPAAPEHTDPSEPRGSVSCCSLLRGLSSGWSSPLLPAPVCNPNKAIFTVDAKTTEILVANDKACGLLGYSSQDLIGQKLTQFFLRSDSDVVEALSEEHMEADGHAAVVFGTVVDIISRSGEKIPVSVWMKRMRQERRLCCVVVLEPVERVSTWVAFQSDGTVTSCDSLFAHLHGYVSGEDVAGQHITDLIPSVQLPPSGQHIPKNLKIQRSVGRARDGTTFPLSLKLKSQPSSEEATTGEAAPVSGYRASVWVFCTISGLITLLPDGTIHGINHSFALTLFGYGKTELLGKNITFLIPGFYSYMDLAYNSSLQLPDLASCLDVGNESGCGERTLDPWQGQDPAEGGQDPRINVVLAGGHVVPRDEIRKLMESQDIFTGTQTELIAGGQLLSCLSPQPAPGVDNVPEGSLPVHGEQALPKDQQITALGREEPVAIESPGQDLLGESRSEPVDVKPFASCEDSEAPVPAEDGGSDAGMCGLCQKAQLERMGVSGPSGSDLWAGAAVAKPQAKGQLAGGSLLMHCPCYGSEWGLWWRSQDLAPSPSGMAGLSFGTPTLDEPWLGVENDREELQTCLIKEQLSQLSLAGALDVPHAELVPTECQAVTAPVSSCDLGGRDLCGGCTGSSSACYALATDLPGGLEAVEAQEVDVNSFSWNLKELFFSDQTDQTSSNCSCATSELRETPSSLAVGSDPDVGSLQEQGSCVLDDRELLLLTGTCVDLGQGRRFRESCVGHDPTEPLEVCLVSSEHYAASDRESPGHVPSTLDAGPEDTCPSAEEPRLNVQVTSTPVIVMRGAAGLQREIQEGAYSGSCYHRDGLRLSIQFEVRRVELQGPTPLFCCWLVKDLLHSQRDSAARTRLFLASLPGSTHSTAAELTGPSLVEVLRARPWFEEPPKAVELEGLAACEGEYSQKYSTMSPLGSGAFGFVWTAVDKEKNKEVVVKFIKKEKVLEDCWIEDPKLGKVTLEIAILSRVEHANIIKVLDIFENQGFFQLVMEKHGSGLDLFAFIDRHPRLDEPLASYIFRQLVSAVGYLRLKDIIHRDIKDENIVIAEDFTIKLIDFGSAAYLERGKLFYTFCGTIEYCAPEVLMGNPYRGPELEMWSLGVTLYTLVFEENPFCELEETVEAAIHPPYLVSKELMSLVSGLLQPVPERRTTLEKLVTDPWVTQPVNLADYTWEEVFRVNKPESGVLSAASLEMGNRSLSDVAQAQELCGGPVPGEAPNGQGCLHPGDPRLLTS.

Met1 bears the N-acetylmethionine mark. The residue at position 19 (Ser19) is a Phosphoserine. Residues 20–47 (LPLPVSAEGPAAQTTAEPSRSFSSAHRH) are disordered. Polar residues predominate over residues 31-43 (AQTTAEPSRSFSS). Thr34 carries the phosphothreonine modification. PAS domains are found at residues 119–190 (SSPL…MEAD) and 335–402 (YRAS…SLQL). Ser582 carries the phosphoserine modification. The tract at residues 837-857 (AASDRESPGHVPSTLDAGPED) is disordered. A Phosphoserine modification is found at Ser939. One can recognise a Protein kinase domain in the interval 999 to 1251 (YSTMSPLGSG…LEKLVTDPWV (253 aa)). ATP-binding positions include 1005–1013 (LGSGAFGFV), Lys1028, and 1082–1089 (EKHGSGLD). Asp1128 (proton acceptor) is an active-site residue. Asp1146 serves as a coordination point for ATP. Phosphothreonine; by autocatalysis is present on residues Thr1161 and Thr1165. Residues 1298–1323 (CGGPVPGEAPNGQGCLHPGDPRLLTS) form a disordered region.

Belongs to the protein kinase superfamily. CAMK Ser/Thr protein kinase family. Post-translationally, autophosphorylated on Thr-1161 and Thr-1165. Autophosphorylation is activated by phospholipids. In terms of tissue distribution, ubiquitously expressed, with slightly higher expression in brain, prostate and testis. Reduced expression was found in placenta. Present in germ cells of testis and in the midpiece of sperm tails (at protein level).

It is found in the cytoplasm. The protein localises to the nucleus. It catalyses the reaction L-seryl-[protein] + ATP = O-phospho-L-seryl-[protein] + ADP + H(+). The catalysed reaction is L-threonyl-[protein] + ATP = O-phospho-L-threonyl-[protein] + ADP + H(+). Its activity is regulated as follows. Protein kinase activity is inhibited by the first PAS domain: binding of an unidentified ligand desinhibits the protein kinase activity. May be activated by autophosphorylation on Thr-1161 and Thr-1165. The activating role of autophosphorylation at Thr-1161 is unclear: according to a report, autophosphorylation at Thr-1161 does not play a major role in activation. Autophosphorylation is enhanced upon phosphatidylinositol monophosphate (phosphatidylinositol 4-phosphate) binding and inhibited upon phosphatidylinositol bi- and tri-phosphate binding. In contrast, phosphorylation of target proteins is inhibited upon all phosphatidylinositol-binding (phosphatidylinositol mono- bi- and tri-phosphate). Functionally, serine/threonine-protein kinase involved in energy homeostasis and protein translation. Phosphorylates EEF1A1, GYS1, PDX1 and RPS6. Probably plays a role under changing environmental conditions (oxygen, glucose, nutrition), rather than under standard conditions. Acts as a sensor involved in energy homeostasis: regulates glycogen synthase synthesis by mediating phosphorylation of GYS1, leading to GYS1 inactivation. May be involved in glucose-stimulated insulin production in pancreas and regulation of glucagon secretion by glucose in alpha cells; however such data require additional evidences. May play a role in regulation of protein translation by phosphorylating EEF1A1, leading to increase translation efficiency. May also participate in respiratory regulation. The chain is PAS domain-containing serine/threonine-protein kinase (PASK) from Homo sapiens (Human).